Reading from the N-terminus, the 157-residue chain is Endoribonuclease YbeY (157 aa).

The Zn(2+) site is built by histidine 121, histidine 125, and aspartate 131.

It belongs to the endoribonuclease YbeY family. It depends on Zn(2+) as a cofactor.

Its subcellular location is the cytoplasm. Single strand-specific metallo-endoribonuclease involved in late-stage 70S ribosome quality control and in maturation of the 3' terminus of the 16S rRNA. In Salinibacter ruber (strain DSM 13855 / M31), this protein is Endoribonuclease YbeY.